The sequence spans 66 residues: UPF0434 protein Mnod_1613 (66 aa).

This sequence belongs to the UPF0434 family.

In Methylobacterium nodulans (strain LMG 21967 / CNCM I-2342 / ORS 2060), this protein is UPF0434 protein Mnod_1613.